A 595-amino-acid polypeptide reads, in one-letter code: Protein LUTEIN DEFICIENT 5, chloroplastic (595 aa).

The transit peptide at 1 to 28 (MAMAFPLSYTPTITVKPVTYSRRSNFVV) directs the protein to the chloroplast. Heme is bound at residue Cys-516.

The protein belongs to the cytochrome P450 family. Requires heme as cofactor.

The protein resides in the plastid. It localises to the chloroplast. Its function is as follows. Heme-containing cytochrome P450 involved in the biosynthesis of xanthophylls. Specific for beta-ring hydroxylation of alpha- and beta-carotene. Also has a low activity toward the epsilon-rings of alpha-carotene. The beta-ring of alpha-carotene is the preferred substrate in planta. The chain is Protein LUTEIN DEFICIENT 5, chloroplastic (CYP97A3) from Arabidopsis thaliana (Mouse-ear cress).